A 327-amino-acid polypeptide reads, in one-letter code: Thiosulfate dehydrogenase (327 aa).

The signal sequence occupies residues 1–26; that stretch reads MKIIPYRKRSVLIATIFAISAVGITG. Low complexity predominate over residues 66–78; sequence NDMTATAGGTDTA. The disordered stretch occupies residues 66-93; the sequence is NDMTATAGGTDTASGKPTIKMPDESTIP. Cytochrome c domains lie at 99 to 196 and 219 to 305; these read AAVR…SWLS and PNTD…THLP. 6 residues coordinate heme c: Cys-125, Cys-128, His-129, Cys-232, Cys-235, and His-236.

Monomer. In terms of processing, binds 2 heme c groups covalently per subunit.

The protein resides in the periplasm. It catalyses the reaction 2 thiosulfate + 2 Fe(III)-[cytochrome c] = tetrathionate + 2 Fe(II)-[cytochrome c] + 2 H(+). In terms of biological role, catalyzes the oxidation of 2 molecules of thiosulfate to tetrathionate. This is Thiosulfate dehydrogenase (tsdA) from Psychrobacter arcticus (strain DSM 17307 / VKM B-2377 / 273-4).